The primary structure comprises 354 residues: Fructose-bisphosphate aldolase (354 aa).

Residue serine 50 coordinates D-glyceraldehyde 3-phosphate. Catalysis depends on aspartate 83, which acts as the Proton donor. Histidine 84, aspartate 105, glutamate 142, and histidine 198 together coordinate Zn(2+). A dihydroxyacetone phosphate-binding site is contributed by glycine 199. Residue histidine 232 participates in Zn(2+) binding. Residues 233 to 235 (GSS) and 275 to 278 (NIDT) contribute to the dihydroxyacetone phosphate site.

This sequence belongs to the class II fructose-bisphosphate aldolase family. It depends on Zn(2+) as a cofactor.

It catalyses the reaction beta-D-fructose 1,6-bisphosphate = D-glyceraldehyde 3-phosphate + dihydroxyacetone phosphate. Its pathway is carbohydrate degradation; glycolysis; D-glyceraldehyde 3-phosphate and glycerone phosphate from D-glucose: step 4/4. Catalyzes the aldol condensation of dihydroxyacetone phosphate (DHAP or glycerone-phosphate) with glyceraldehyde 3-phosphate (G3P) to form fructose 1,6-bisphosphate (FBP) in gluconeogenesis and the reverse reaction in glycolysis. The sequence is that of Fructose-bisphosphate aldolase (fba) from Stutzerimonas stutzeri (Pseudomonas stutzeri).